We begin with the raw amino-acid sequence, 125 residues long: Small ribosomal subunit protein uS12 (125 aa).

At D89 the chain carries 3-methylthioaspartic acid.

Belongs to the universal ribosomal protein uS12 family. As to quaternary structure, part of the 30S ribosomal subunit. Contacts proteins S8 and S17. May interact with IF1 in the 30S initiation complex.

Functionally, with S4 and S5 plays an important role in translational accuracy. Its function is as follows. Interacts with and stabilizes bases of the 16S rRNA that are involved in tRNA selection in the A site and with the mRNA backbone. Located at the interface of the 30S and 50S subunits, it traverses the body of the 30S subunit contacting proteins on the other side and probably holding the rRNA structure together. The combined cluster of proteins S8, S12 and S17 appears to hold together the shoulder and platform of the 30S subunit. In Bordetella avium (strain 197N), this protein is Small ribosomal subunit protein uS12.